A 101-amino-acid chain; its full sequence is NADH-quinone oxidoreductase subunit K (101 aa).

A run of 3 helical transmembrane segments spans residues 4-24 (LTHF…GIFL), 30-50 (IILL…FIAF), and 61-81 (IFVF…LAIL).

The protein belongs to the complex I subunit 4L family. NDH-1 is composed of 14 different subunits. Subunits NuoA, H, J, K, L, M, N constitute the membrane sector of the complex.

Its subcellular location is the cell inner membrane. The enzyme catalyses a quinone + NADH + 5 H(+)(in) = a quinol + NAD(+) + 4 H(+)(out). NDH-1 shuttles electrons from NADH, via FMN and iron-sulfur (Fe-S) centers, to quinones in the respiratory chain. The immediate electron acceptor for the enzyme in this species is believed to be ubiquinone. Couples the redox reaction to proton translocation (for every two electrons transferred, four hydrogen ions are translocated across the cytoplasmic membrane), and thus conserves the redox energy in a proton gradient. This Chromobacterium violaceum (strain ATCC 12472 / DSM 30191 / JCM 1249 / CCUG 213 / NBRC 12614 / NCIMB 9131 / NCTC 9757 / MK) protein is NADH-quinone oxidoreductase subunit K.